Reading from the N-terminus, the 1023-residue chain is StAR-related lipid transfer protein 8 (1023 aa).

2 disordered regions span residues 46–67 (PMGSSDLLAPPSPGLPATSSCE) and 82–161 (TVSL…KVSK). Positions 99–114 (PSSSDRPLLSPTQGQE) are enriched in polar residues. Serine 108 is modified (phosphoserine). Over residues 120–130 (AKKRHRNRSFL) the composition is skewed to basic residues. Residues 143–161 (GSQQAEPKHSPATSEKVSK) are compositionally biased toward polar residues. Arginine 169 carries the post-translational modification Asymmetric dimethylarginine. Residues serine 235 and serine 238 each carry the phosphoserine modification. Low complexity predominate over residues 387–397 (PAQAPAEAEPV). Disordered stretches follow at residues 387-461 (PAQA…MNEA) and 467-486 (LAGLQASMPRERRDSGVGAS). Over residues 441–459 (ISDTVASSSELDSSGNSMN) the composition is skewed to polar residues. Phosphoserine is present on residues serine 498 and serine 506. The Rho-GAP domain occupies 573-777 (PPLIHVQRTG…HMISDCKKLF (205 aa)). Residues 733 to 757 (KKDSPSPRIKSKRSLIGRPGPRDLS) form a disordered region. Residues 809-1017 (AQAAGVSLSL…RDSFPTLQAA (209 aa)) enclose the START domain.

As to quaternary structure, binds both the SH2 and PTB domains of TNS1. As to expression, widely expressed with highest levels in kidney, lung and placenta.

Its subcellular location is the cell junction. The protein localises to the focal adhesion. Functionally, accelerates GTPase activity of RHOA and CDC42, but not RAC1. Stimulates the hydrolysis of phosphatidylinositol 4,5-bisphosphate by PLCD1. This chain is StAR-related lipid transfer protein 8 (STARD8), found in Homo sapiens (Human).